Here is a 254-residue protein sequence, read N- to C-terminus: 3-deoxy-manno-octulosonate cytidylyltransferase (254 aa).

Belongs to the KdsB family.

The protein resides in the cytoplasm. The catalysed reaction is 3-deoxy-alpha-D-manno-oct-2-ulosonate + CTP = CMP-3-deoxy-beta-D-manno-octulosonate + diphosphate. It functions in the pathway nucleotide-sugar biosynthesis; CMP-3-deoxy-D-manno-octulosonate biosynthesis; CMP-3-deoxy-D-manno-octulosonate from 3-deoxy-D-manno-octulosonate and CTP: step 1/1. It participates in bacterial outer membrane biogenesis; lipopolysaccharide biosynthesis. Its function is as follows. Activates KDO (a required 8-carbon sugar) for incorporation into bacterial lipopolysaccharide in Gram-negative bacteria. The protein is 3-deoxy-manno-octulosonate cytidylyltransferase of Pseudomonas aeruginosa (strain UCBPP-PA14).